Here is a 276-residue protein sequence, read N- to C-terminus: MSATPDRKGQLGPGDIRARKGGEPVVCLTAYTTPMARLVDAHCDIALVGDSLGMVLHGLPSTIGVSMEMMILHGKAVARGCSRACIVVDMPFGSYEEGPEQAFRNAARLMAETGCQAVKLEGGRHMAETVAFLVARGIPVMGHVGLTPQSVNTLGGYKVQGRGHHEADRIAADAAALADAGAFAVVLEKLPEALGRRITQEIAVPTIGIGAGLDCDGQVLVVDDMLGLFSDFRPKFVKRYAELGQDADAAIAAYAAEVRARRFPGPEHVFGEGKPA.

Residues aspartate 50 and aspartate 89 each contribute to the Mg(2+) site. 3-methyl-2-oxobutanoate-binding positions include 50-51, aspartate 89, and lysine 119; that span reads DS. Residue glutamate 121 participates in Mg(2+) binding. Residue glutamate 188 is the Proton acceptor of the active site.

This sequence belongs to the PanB family. As to quaternary structure, homodecamer; pentamer of dimers. It depends on Mg(2+) as a cofactor.

Its subcellular location is the cytoplasm. It catalyses the reaction 3-methyl-2-oxobutanoate + (6R)-5,10-methylene-5,6,7,8-tetrahydrofolate + H2O = 2-dehydropantoate + (6S)-5,6,7,8-tetrahydrofolate. It participates in cofactor biosynthesis; (R)-pantothenate biosynthesis; (R)-pantoate from 3-methyl-2-oxobutanoate: step 1/2. Functionally, catalyzes the reversible reaction in which hydroxymethyl group from 5,10-methylenetetrahydrofolate is transferred onto alpha-ketoisovalerate to form ketopantoate. The protein is 3-methyl-2-oxobutanoate hydroxymethyltransferase of Paracoccus denitrificans (strain Pd 1222).